The sequence spans 192 residues: PTS-dependent dihydroxyacetone kinase, ADP-binding subunit DhaL (192 aa).

Positions 5–189 constitute a DhaL domain; that stretch reads DTTIEWLGKF…SAYLFETLLE (185 aa). Mg(2+)-binding residues include Asp29, Asp34, and Asp36. Residues 37–40, 78–79, Gly115, Met124, Arg161, and 174–176 each bind ADP; these read HGAN, AS, and DPG.

Homodimer. The dihydroxyacetone kinase complex is composed of a homodimer of DhaM, a homodimer of DhaK and the subunit DhaL. Requires Mg(2+) as cofactor.

The protein localises to the cytoplasm. It carries out the reaction dihydroxyacetone + phosphoenolpyruvate = dihydroxyacetone phosphate + pyruvate. It participates in polyol metabolism; glycerol degradation. Functionally, ADP-binding subunit of the dihydroxyacetone kinase, which is responsible for the phosphoenolpyruvate (PEP)-dependent phosphorylation of dihydroxyacetone. DhaL-ADP is converted to DhaL-ATP via a phosphoryl group transfer from DhaM and transmits it to dihydroxyacetone binds to DhaK. This Lactococcus lactis subsp. lactis (strain IL1403) (Streptococcus lactis) protein is PTS-dependent dihydroxyacetone kinase, ADP-binding subunit DhaL.